The following is a 238-amino-acid chain: UPF0758 protein Dtpsy_2777 (238 aa).

In terms of domain architecture, MPN spans 116–238; that stretch reads VFDSPQAVQH…ALSMAEQGLV (123 aa). Residues H187, H189, and D200 each contribute to the Zn(2+) site. The JAMM motif signature appears at 187–200; it reads HNHPSGSVQPSRAD.

It belongs to the UPF0758 family.

The polypeptide is UPF0758 protein Dtpsy_2777 (Acidovorax ebreus (strain TPSY) (Diaphorobacter sp. (strain TPSY))).